A 437-amino-acid chain; its full sequence is Histidine--tRNA ligase (437 aa).

This sequence belongs to the class-II aminoacyl-tRNA synthetase family. Homodimer.

The protein resides in the cytoplasm. The enzyme catalyses tRNA(His) + L-histidine + ATP = L-histidyl-tRNA(His) + AMP + diphosphate + H(+). The sequence is that of Histidine--tRNA ligase from Opitutus terrae (strain DSM 11246 / JCM 15787 / PB90-1).